The sequence spans 461 residues: Flavin-containing monooxygenase FMO GS-OX4 (461 aa).

17-22 (GAGAAG) lines the FAD pocket. 211-216 (GNFASG) contacts NADP(+).

Belongs to the FMO family.

The enzyme catalyses a (Z)-omega-(methylsulfanyl)-N-sulfo-alkylhydroximate S-glucoside + NADPH + O2 + H(+) = a (Z)-omega-(methylsulfinyl)-alkyl-glucosinolate + NADP(+) + H2O. Functionally, catalyzes the conversion of methylthioalkyl glucosinolates of any chain length into methylsulfinylalkyl glucosinolates. This is Flavin-containing monooxygenase FMO GS-OX4 (FMOGS-OX4) from Arabidopsis thaliana (Mouse-ear cress).